A 369-amino-acid polypeptide reads, in one-letter code: P2X receptor B (369 aa).

The Cytoplasmic segment spans residues 1–25; the sequence is MTIDWDSILSYNTIKVVRIRDRRLG. The chain crosses the membrane as a helical span at residues 26-46; that stretch reads ILHLCFLIVIVLYVVVYSAII. The Lumenal segment spans residues 47 to 369; sequence KKGYVTTEEP…DKLYHNIEAL (323 aa). The tract at residues 283–296 is pore-forming motif; sequence RHAIRLIFIQTGVI.

The protein belongs to the P2X receptor family.

The protein resides in the contractile vacuole membrane. P2X receptors are ATP-gated ion channels that play a role in intracellular calcium signaling. Not required for the purinergic response to extracellular nucleotides. Not essential for osmoregulation. Inward currents are evoked by intracellular ATP and ATP analogs. Insensitive to the P2 receptor antagonists PPADS and suramin, and also copper ions. Inhibited by sodium ions. Permeable to chloride ions. The protein is P2X receptor B (p2xB) of Dictyostelium discoideum (Social amoeba).